The primary structure comprises 553 residues: Glycerol kinase 2 (553 aa).

Substrate is bound at residue threonine 20. Arginine 24 lines the ATP pocket. Substrate-binding residues include arginine 94, tyrosine 148, and aspartate 259. ATP contacts are provided by residues threonine 281, glycine 326, and 427-431; that span reads GMTNN. The helical transmembrane segment at 526-546 threads the bilayer; it reads IFSSLPLGFFIVSSMVMLIGA.

This sequence belongs to the FGGY kinase family. As to quaternary structure, interacts with ARMC12. Interacts with PLD6. Testis-specific. Expressed in the midpiece of spermatozoa.

Its subcellular location is the mitochondrion outer membrane. It localises to the cytoplasm. The enzyme catalyses glycerol + ATP = sn-glycerol 3-phosphate + ADP + H(+). It participates in polyol metabolism; glycerol degradation via glycerol kinase pathway; sn-glycerol 3-phosphate from glycerol: step 1/1. Key enzyme in the regulation of glycerol uptake and metabolism. Essential for male fertility and sperm mitochondrial sheath formation. Required for proper arrangement of crescent-like mitochondria to form the mitochondrial sheath during spermatogenesis. Can induce mitochondrial clustering through interactions with PLD6 and up-regulation of phosphatidic acid synthesis in the mitochondria. The polypeptide is Glycerol kinase 2 (GK2) (Homo sapiens (Human)).